We begin with the raw amino-acid sequence, 2464 residues long: Nonribosomal peptide synthetase NPS2 (2464 aa).

Positions 275-670 (DDHHPGTSQP…GRIDTQIKLR (396 aa)) are adenylation 1. Positions 814-888 (TKAEGQLLEI…QIAKALDASS (75 aa)) constitute a Carrier 1 domain. An O-(pantetheine 4'-phosphoryl)serine modification is found at serine 848. A condensation 1 region spans residues 924–1325 (IYPPFPLQEG…EGLALDLAQG (402 aa)). The Carrier 2 domain occupies 1364–1437 (EDLLLRLRKI…RMAASAGKKI (74 aa)). Serine 1398 carries the O-(pantetheine 4'-phosphoryl)serine modification. A condensation 2 region spans residues 1479 to 1887 (DVFPVTTLQA…LRVLVDDLDA (409 aa)). The 77-residue stretch at 1917 to 1993 (SSWDEKSSTL…DLVMRAGAED (77 aa)) folds into the Carrier 3 domain. Serine 1954 carries the O-(pantetheine 4'-phosphoryl)serine modification. The condensation 3 stretch occupies residues 2047–2340 (GGSRYQHVFG…ATQIQDDLRE (294 aa)).

Belongs to the NRP synthetase family.

The protein operates within siderophore biosynthesis. Its function is as follows. Nonribosomal peptide synthetase; part of the siderophore basidioferrin biosynthetic pathway. The biosynthesis of basidioferrin depends on the hydroxylation of ornithine to N(5)-hydroxyornithine, catalyzed by the monooxygenase SMO1. The second step, the acylation of N(5)-hydroxy-L-ornithine is catalyzed by a not yet identified N-acyltransferase. Finally, assembly of basidioferrin is catalyzed by the nonribosomal peptide synthase (NRPS) NPS2 via amide bond formation between three L-AHO molecules to release the linear L-AHO trimer. N-5-acetyl-N-5-hydroxy-L-ornithine (L-AHO) and N-5-cis-anhydromevalonyl-N-5-hydroxy-L-ornithine (L-AMHO) are accepted as the substrates by the NPS2 adenylation (A) domain, but only L-AHO is trimerized. This chain is Nonribosomal peptide synthetase NPS2, found in Ceriporiopsis subvermispora (strain B) (White-rot fungus).